The chain runs to 462 residues: Kinetochore protein Nuf2-B (462 aa).

Residues 143–462 adopt a coiled-coil conformation; the sequence is SGYKSALENV…AELNRRLSRQ (320 aa). The tract at residues 236–259 is disordered; the sequence is EQERMKSQIVESPEQRKSKTERMK. Positions 248-259 are enriched in basic and acidic residues; sequence PEQRKSKTERMK.

This sequence belongs to the NUF2 family. Component of the NDC80 complex, which is composed of ndc80, cdca1, spbc24 and spbc25. The NDC80 complex interacts with mis12 and zwint.

It localises to the nucleus. Its subcellular location is the chromosome. It is found in the centromere. The protein resides in the kinetochore. In terms of biological role, acts as a component of the essential kinetochore-associated NDC80 complex, which is required for chromosome segregation and spindle checkpoint activity. Required for kinetochore integrity and the organization of stable microtubule binding sites in the outer plate of the kinetochore. The NDC80 complex synergistically enhances the affinity of the SKA1 complex for microtubules and may allow the NDC80 complex to track depolymerizing microtubules. This Xenopus laevis (African clawed frog) protein is Kinetochore protein Nuf2-B (nuf2-b).